Here is a 366-residue protein sequence, read N- to C-terminus: Chorismate synthase (366 aa).

Arg-48 and Arg-54 together coordinate NADP(+). Residues 132 to 134 (RSS), 244 to 245 (NA), Gly-289, 304 to 308 (KPTSS), and Arg-330 each bind FMN.

It belongs to the chorismate synthase family. As to quaternary structure, homotetramer. Requires FMNH2 as cofactor.

It carries out the reaction 5-O-(1-carboxyvinyl)-3-phosphoshikimate = chorismate + phosphate. Its pathway is metabolic intermediate biosynthesis; chorismate biosynthesis; chorismate from D-erythrose 4-phosphate and phosphoenolpyruvate: step 7/7. Catalyzes the anti-1,4-elimination of the C-3 phosphate and the C-6 proR hydrogen from 5-enolpyruvylshikimate-3-phosphate (EPSP) to yield chorismate, which is the branch point compound that serves as the starting substrate for the three terminal pathways of aromatic amino acid biosynthesis. This reaction introduces a second double bond into the aromatic ring system. The polypeptide is Chorismate synthase (Methylorubrum populi (strain ATCC BAA-705 / NCIMB 13946 / BJ001) (Methylobacterium populi)).